A 351-amino-acid chain; its full sequence is Glycerol-3-phosphate dehydrogenase [NAD(P)+] (351 aa).

The NADPH site is built by serine 12, tryptophan 13, histidine 33, and lysine 114. The sn-glycerol 3-phosphate site is built by lysine 114, glycine 145, and serine 147. Alanine 149 serves as a coordination point for NADPH. Sn-glycerol 3-phosphate-binding residues include lysine 200, aspartate 253, serine 263, arginine 264, and asparagine 265. Residue lysine 200 is the Proton acceptor of the active site. Position 264 (arginine 264) interacts with NADPH. Residues valine 288 and glutamate 290 each coordinate NADPH.

This sequence belongs to the NAD-dependent glycerol-3-phosphate dehydrogenase family.

The protein localises to the cytoplasm. It catalyses the reaction sn-glycerol 3-phosphate + NAD(+) = dihydroxyacetone phosphate + NADH + H(+). The catalysed reaction is sn-glycerol 3-phosphate + NADP(+) = dihydroxyacetone phosphate + NADPH + H(+). The protein operates within membrane lipid metabolism; glycerophospholipid metabolism. In terms of biological role, catalyzes the reduction of the glycolytic intermediate dihydroxyacetone phosphate (DHAP) to sn-glycerol 3-phosphate (G3P), the key precursor for phospholipid synthesis. This chain is Glycerol-3-phosphate dehydrogenase [NAD(P)+], found in Lacticaseibacillus casei (strain BL23) (Lactobacillus casei).